The sequence spans 635 residues: Glutamyl-tRNA(Gln) amidotransferase subunit E (635 aa).

Residues 415–437 form a disordered region; sequence LPDGNTEYMRPLPGKARMYPETD.

The protein belongs to the GatB/GatE family. GatE subfamily. Heterodimer of GatD and GatE.

The enzyme catalyses L-glutamyl-tRNA(Gln) + L-glutamine + ATP + H2O = L-glutaminyl-tRNA(Gln) + L-glutamate + ADP + phosphate + H(+). Functionally, allows the formation of correctly charged Gln-tRNA(Gln) through the transamidation of misacylated Glu-tRNA(Gln) in organisms which lack glutaminyl-tRNA synthetase. The reaction takes place in the presence of glutamine and ATP through an activated gamma-phospho-Glu-tRNA(Gln). The GatDE system is specific for glutamate and does not act on aspartate. This chain is Glutamyl-tRNA(Gln) amidotransferase subunit E, found in Pyrococcus horikoshii (strain ATCC 700860 / DSM 12428 / JCM 9974 / NBRC 100139 / OT-3).